The following is a 200-amino-acid chain: MRDMLQLVPMVVEQSARGERSFDIYSRLLRERIIFLNGEVNDAMSGLVCAQLLFLEAENPNRPINLYINSYGGVVTSGLAMYDTMQFIKAPVHTLCMGTARSMGSFLLMAGERGHRAALPNASLHVHQPLGGFQGQASDILIHANEMQETKRRITRLYAQHCGRTEAEVERTLDRDHFMTAQQGVEWGLIDRVFAERDAT.

The active-site Nucleophile is the S102. H127 is a catalytic residue.

This sequence belongs to the peptidase S14 family. In terms of assembly, fourteen ClpP subunits assemble into 2 heptameric rings which stack back to back to give a disk-like structure with a central cavity, resembling the structure of eukaryotic proteasomes.

The protein resides in the cytoplasm. The catalysed reaction is Hydrolysis of proteins to small peptides in the presence of ATP and magnesium. alpha-casein is the usual test substrate. In the absence of ATP, only oligopeptides shorter than five residues are hydrolyzed (such as succinyl-Leu-Tyr-|-NHMec, and Leu-Tyr-Leu-|-Tyr-Trp, in which cleavage of the -Tyr-|-Leu- and -Tyr-|-Trp bonds also occurs).. Functionally, cleaves peptides in various proteins in a process that requires ATP hydrolysis. Has a chymotrypsin-like activity. Plays a major role in the degradation of misfolded proteins. This Bradyrhizobium diazoefficiens (strain JCM 10833 / BCRC 13528 / IAM 13628 / NBRC 14792 / USDA 110) protein is ATP-dependent Clp protease proteolytic subunit 1.